Here is a 561-residue protein sequence, read N- to C-terminus: 7-keto 8-aminopelargonic acid transporter (561 aa).

Over 1 to 49 (MNRVGAVFLFVYERNFFLSIVPDRHRTEIRMSSSERSEVKFDKHFNWWS) the chain is Cytoplasmic. The helical transmembrane segment at 50-70 (LLGIAFSLSCSWVGISASMAV) threads the bilayer. Residues 71-77 (GIASGGP) lie on the Extracellular side of the membrane. Residues 78–98 (LLIIYGLIIAAFFSLMCGISL) form a helical membrane-spanning segment. The Cytoplasmic segment spans residues 99–160 (GDFAAILPNS…NVEVSSKFQK (62 aa)). Residues 161–181 (VSSMVVGLLNYFGAIFTTASI) form a helical membrane-spanning segment. Topologically, residues 182–204 (CSSLSMSCIGIHKLLHPDYELKH) are extracellular. A helical membrane pass occupies residues 205-225 (WHVFVGYECINAVLTLFNIYS). At 226 to 230 (TPLPY) the chain is on the cytoplasmic side. The chain crosses the membrane as a helical span at residues 231–251 (ISQFGLYTSLLSFAMTFIICI). Residues 252–281 (VSRSDNTVDPWPKASNIFGSFDNQTGWNSS) are Extracellular-facing. The chain crosses the membrane as a helical span at residues 282–302 (GMAFVVGLVNPIWAFVGIDSA). The Cytoplasmic portion of the chain corresponds to 303 to 321 (THMIDEVGYSKSRFLVPKV). Residues 322–342 (IITTIIVGFVTSFIYCVGLFF) traverse the membrane as a helical segment. Topologically, residues 343–369 (CITDQTAVVESILPIVEIFYQATGNRN) are extracellular. The chain crosses the membrane as a helical span at residues 370–390 (LSVFLQCMCITTGFVSGIASG). Over 391 to 439 (TWQSRILQSFGKSYAPFYKEGSLGNKSLKKLAVLTPGFKSPLYAHFLSQ) the chain is Cytoplasmic. The chain crosses the membrane as a helical span at residues 440 to 460 (ICVTIIGCIFMGSSTAFNAII). Thr-461 is a topological domain (extracellular). The helical transmembrane segment at 462 to 482 (ACITLLLMSYAVPSFIFLFVI) threads the bilayer. At 483–507 (KKEKFIHRIESDVNCVSRPNRRRMS) the chain is on the cytoplasmic side. A helical membrane pass occupies residues 508–528 (MIPHIICILWTLFCLVFLSFP). The Extracellular segment spans residues 529 to 540 (YTLPVTAGNMNY). A helical membrane pass occupies residues 541-560 (TSVVYAVVFCIISIVVFPTC). Residue Ile-561 is a topological domain, cytoplasmic.

This sequence belongs to the amino acid-polyamine-organocation (APC) superfamily.

It is found in the membrane. Transport into the cell of 7-keto 8-aminopelargonic acid. This Saccharomyces cerevisiae (strain ATCC 204508 / S288c) (Baker's yeast) protein is 7-keto 8-aminopelargonic acid transporter (BIO5).